The primary structure comprises 287 residues: MAGAKEIRSKIASVQNTQKITKAMEMVAASKMRKSQERMAASRPYADTMRKVIGHLANGNLEYKHPYLEERDVKRVGYLVVSTDRGLCGGLNINLFKKLLAEMKAWSDKGVQCDLAMIGSKGVSFFNSVGGNVVAQVTGMGDNPSLSELIGPVKVMLQAYDEGRLDKLYVVSNKFINTMSQVPTITQLLPLPASEDADLKRKSWDYLYEPDPKALLDTLLRRYVESQVYQGVVENLASEQAARMVAMKAATDNGGSLIKELQLVYNKARQASITQELTEIVSGAAAV.

Belongs to the ATPase gamma chain family. In terms of assembly, F-type ATPases have 2 components, CF(1) - the catalytic core - and CF(0) - the membrane proton channel. CF(1) has five subunits: alpha(3), beta(3), gamma(1), delta(1), epsilon(1). CF(0) has three main subunits: a, b and c.

Its subcellular location is the cell inner membrane. In terms of biological role, produces ATP from ADP in the presence of a proton gradient across the membrane. The gamma chain is believed to be important in regulating ATPase activity and the flow of protons through the CF(0) complex. This Klebsiella pneumoniae subsp. pneumoniae (strain ATCC 700721 / MGH 78578) protein is ATP synthase gamma chain.